The primary structure comprises 558 residues: 2-isopropylmalate synthase (558 aa).

In terms of domain architecture, Pyruvate carboxyltransferase spans 31–306 (PIWCAVDLRD…DPGIDFSNID (276 aa)). Positions 40, 245, 247, and 281 each coordinate Mg(2+). The segment at 440-558 (AGSPYSFLEH…LCAANHLSDK (119 aa)) is regulatory domain.

The protein belongs to the alpha-IPM synthase/homocitrate synthase family. LeuA type 2 subfamily. In terms of assembly, homodimer. The cofactor is Mg(2+).

The protein resides in the cytoplasm. The catalysed reaction is 3-methyl-2-oxobutanoate + acetyl-CoA + H2O = (2S)-2-isopropylmalate + CoA + H(+). Its pathway is amino-acid biosynthesis; L-leucine biosynthesis; L-leucine from 3-methyl-2-oxobutanoate: step 1/4. In terms of biological role, catalyzes the condensation of the acetyl group of acetyl-CoA with 3-methyl-2-oxobutanoate (2-ketoisovalerate) to form 3-carboxy-3-hydroxy-4-methylpentanoate (2-isopropylmalate). This Rhodospirillum rubrum (strain ATCC 11170 / ATH 1.1.1 / DSM 467 / LMG 4362 / NCIMB 8255 / S1) protein is 2-isopropylmalate synthase.